A 276-amino-acid chain; its full sequence is MNSLQDLIEQAFENRQNLSLDTASSDLINAINEVLSGLDNGQFRVAEKINGEWTVHQWLKKAVLLSFKLFPNQIIDAGFCKFYDKIPLKYTDCSNEQFQQSGVRVVPHAMVRRGAYIAKNTVLMPSYVNIGAYIDEGVMVDTWATVGSCAQIGKNVHISGGAGIGGVLEPLQANPTIIEDNCFIGARSEIVEGVIVEKNSVISMGVFLGQSTKIYNRITGEVSYGRIPAGSVVVAGNLPSHDGSHSLYCAVIVKQVDEKTRAKVSINDLLRANQDD.

Substrate is bound by residues Arg104 and Asp141.

This sequence belongs to the transferase hexapeptide repeat family. In terms of assembly, homotrimer.

Its subcellular location is the cytoplasm. It carries out the reaction (S)-2,3,4,5-tetrahydrodipicolinate + succinyl-CoA + H2O = (S)-2-succinylamino-6-oxoheptanedioate + CoA. It functions in the pathway amino-acid biosynthesis; L-lysine biosynthesis via DAP pathway; LL-2,6-diaminopimelate from (S)-tetrahydrodipicolinate (succinylase route): step 1/3. The sequence is that of 2,3,4,5-tetrahydropyridine-2,6-dicarboxylate N-succinyltransferase from Legionella pneumophila (strain Paris).